The chain runs to 388 residues: Putative F-box protein At3g17490 (388 aa).

An F-box domain is found at 1-46 (MMMPHLSEDLVEEILSRVPAISLKRLRYTCKQWNALFNDQRFSKKH).

The chain is Putative F-box protein At3g17490 from Arabidopsis thaliana (Mouse-ear cress).